Reading from the N-terminus, the 1178-residue chain is Mitosis inhibitor protein kinase SWE1 (1178 aa).

Polar residues predominate over residues 1–35; the sequence is MDSNPCQDVSGDTSSTPMANNNPTNDSTISSQNHS. Disordered stretches follow at residues 1–61, 188–209, 288–336, 378–434, 451–473, 524–543, 584–606, and 721–754; these read MDSN…HSQQ, NSQI…SSSM, SNNQ…SKGF, PTHT…SSNI, NHAR…TNIS, KNSI…PIKR, QRFP…QHHD, and KREI…GDDP. Over residues 37–55 the composition is skewed to basic residues; that stretch reads IGLRKHQQQHYHQHSHSQM. A compositionally biased stretch (polar residues) spans 299 to 308; sequence VSQSPSPSSK. A compositionally biased stretch (low complexity) spans 388–413; the sequence is SSLNPPSSSTSNSTTAAITSTSPPAN. Residues 591-601 show a composition bias toward low complexity; sequence NPNTTTNNNNT. Residues 791 to 1154 form the Protein kinase domain; it reads MKNIKYIGSG…ACNILEMPEC (364 aa). Residues 797–805 and K818 each bind ATP; that span reads IGSGAFSIA. Residue D929 is the Proton acceptor of the active site. Residues N934 and D947 each coordinate Mg(2+). The tract at residues 1034 to 1068 is disordered; that stretch reads HNPNTNSNISGSGSRSGSGSTGGNGSAGDGSTNST. Over residues 1037-1046 the composition is skewed to low complexity; the sequence is NTNSNISGSG. The span at 1047-1061 shows a compositional bias: gly residues; the sequence is SRSGSGSTGGNGSAG.

The protein belongs to the protein kinase superfamily. Ser/Thr protein kinase family. WEE1 subfamily. Post-translationally, phosphorylated.

Its subcellular location is the bud neck. The protein localises to the nucleus. The enzyme catalyses L-seryl-[protein] + ATP = O-phospho-L-seryl-[protein] + ADP + H(+). It catalyses the reaction L-threonyl-[protein] + ATP = O-phospho-L-threonyl-[protein] + ADP + H(+). In terms of biological role, protein kinase that acts as a negative regulator of entry into mitosis (G2 to M transition) by phosphorylating and inhibiting the mitosis-promoting cyclin B-bound CDC28 at 'Tyr-18'. SWE1-mediated inhibition of CDC28 acts in a cell size or morphogenesis checkpoint to delay mitosis in response to defects in growth, actin organization or bud formation. Plays an important role in filamentous growth. In Candida albicans (strain SC5314 / ATCC MYA-2876) (Yeast), this protein is Mitosis inhibitor protein kinase SWE1 (SWE1).